The sequence spans 330 residues: Fructose-1,6-bisphosphatase class 1 (330 aa).

Mg(2+)-binding residues include Glu-84, Asp-103, Leu-105, and Asp-106. Residues 106 to 109, Asn-196, and Lys-262 contribute to the substrate site; that span reads DGSS. Glu-268 serves as a coordination point for Mg(2+).

This sequence belongs to the FBPase class 1 family. As to quaternary structure, homotetramer. Requires Mg(2+) as cofactor.

Its subcellular location is the cytoplasm. It carries out the reaction beta-D-fructose 1,6-bisphosphate + H2O = beta-D-fructose 6-phosphate + phosphate. Its pathway is carbohydrate biosynthesis; gluconeogenesis. The protein is Fructose-1,6-bisphosphatase class 1 of Shewanella frigidimarina (strain NCIMB 400).